Consider the following 157-residue polypeptide: 2-C-methyl-D-erythritol 2,4-cyclodiphosphate synthase (157 aa).

A divalent metal cation-binding residues include Asp8, His10, and His42. 8–10 contacts 4-CDP-2-C-methyl-D-erythritol 2-phosphate; it reads DVH. Residues 56-58, 132-135, Phe139, and Arg142 contribute to the 4-CDP-2-C-methyl-D-erythritol 2-phosphate site; these read DIG and STSE.

This sequence belongs to the IspF family. As to quaternary structure, homotrimer. A divalent metal cation is required as a cofactor.

The catalysed reaction is 4-CDP-2-C-methyl-D-erythritol 2-phosphate = 2-C-methyl-D-erythritol 2,4-cyclic diphosphate + CMP. The protein operates within isoprenoid biosynthesis; isopentenyl diphosphate biosynthesis via DXP pathway; isopentenyl diphosphate from 1-deoxy-D-xylulose 5-phosphate: step 4/6. Involved in the biosynthesis of isopentenyl diphosphate (IPP) and dimethylallyl diphosphate (DMAPP), two major building blocks of isoprenoid compounds. Catalyzes the conversion of 4-diphosphocytidyl-2-C-methyl-D-erythritol 2-phosphate (CDP-ME2P) to 2-C-methyl-D-erythritol 2,4-cyclodiphosphate (ME-CPP) with a corresponding release of cytidine 5-monophosphate (CMP). This Dehalococcoides mccartyi (strain CBDB1) protein is 2-C-methyl-D-erythritol 2,4-cyclodiphosphate synthase.